The following is a 285-amino-acid chain: Protoheme IX farnesyltransferase (285 aa).

The next 8 helical transmembrane spans lie at 19–39 (RIIW…GKLM), 40–60 (PLSI…SMII), 90–110 (AIYV…LDNP), 111–131 (LTSF…TVWL), 135–155 (SPLN…AGYA), 165–185 (SILL…ALAL), 220–240 (IPFA…VAGI), and 265–285 (FKFS…TRLI).

Belongs to the UbiA prenyltransferase family. Protoheme IX farnesyltransferase subfamily.

The protein localises to the cell membrane. The catalysed reaction is heme b + (2E,6E)-farnesyl diphosphate + H2O = Fe(II)-heme o + diphosphate. The protein operates within porphyrin-containing compound metabolism; heme O biosynthesis; heme O from protoheme: step 1/1. Functionally, converts heme B (protoheme IX) to heme O by substitution of the vinyl group on carbon 2 of heme B porphyrin ring with a hydroxyethyl farnesyl side group. The sequence is that of Protoheme IX farnesyltransferase from Metallosphaera sedula (strain ATCC 51363 / DSM 5348 / JCM 9185 / NBRC 15509 / TH2).